The sequence spans 153 residues: Ribosomal RNA large subunit methyltransferase H (153 aa).

Leu71 and Gly102 together coordinate S-adenosyl-L-methionine.

The protein belongs to the RNA methyltransferase RlmH family. In terms of assembly, homodimer.

It is found in the cytoplasm. It carries out the reaction pseudouridine(1915) in 23S rRNA + S-adenosyl-L-methionine = N(3)-methylpseudouridine(1915) in 23S rRNA + S-adenosyl-L-homocysteine + H(+). Specifically methylates the pseudouridine at position 1915 (m3Psi1915) in 23S rRNA. The protein is Ribosomal RNA large subunit methyltransferase H of Anaeromyxobacter sp. (strain K).